A 63-amino-acid chain; its full sequence is Large ribosomal subunit protein bL32 (63 aa).

The segment at 1–27 is disordered; it reads MANPKAKMSKSRRDKRRAQFNARTKPA. Residues 7 to 18 show a composition bias toward basic residues; sequence KMSKSRRDKRRA.

It belongs to the bacterial ribosomal protein bL32 family.

In Pelodictyon phaeoclathratiforme (strain DSM 5477 / BU-1), this protein is Large ribosomal subunit protein bL32.